A 368-amino-acid chain; its full sequence is GTPase Obg (368 aa).

The region spanning 1–159 is the Obg domain; that stretch reads MQFIDQAEIE…RQLRLELKLL (159 aa). The OBG-type G domain occupies 160–328; the sequence is AEVGIIGLPN…LMQLVWQWLD (169 aa). GTP contacts are provided by residues 166-173, 191-195, 213-216, 280-283, and 309-311; these read GLPNAGKS, FTTLV, DIPG, NKID, and SAA. S173 and T193 together coordinate Mg(2+).

This sequence belongs to the TRAFAC class OBG-HflX-like GTPase superfamily. OBG GTPase family. Monomer. Mg(2+) serves as cofactor.

Its subcellular location is the cytoplasm. An essential GTPase which binds GTP, GDP and possibly (p)ppGpp with moderate affinity, with high nucleotide exchange rates and a fairly low GTP hydrolysis rate. Plays a role in control of the cell cycle, stress response, ribosome biogenesis and in those bacteria that undergo differentiation, in morphogenesis control. The polypeptide is GTPase Obg (Synechocystis sp. (strain ATCC 27184 / PCC 6803 / Kazusa)).